The sequence spans 525 residues: GMP synthase [glutamine-hydrolyzing] (525 aa).

Residues R9–L207 form the Glutamine amidotransferase type-1 domain. C86 functions as the Nucleophile in the catalytic mechanism. Active-site residues include H181 and E183. The GMPS ATP-PPase domain occupies W208 to R400. S235–S241 contributes to the ATP binding site.

Homodimer.

The catalysed reaction is XMP + L-glutamine + ATP + H2O = GMP + L-glutamate + AMP + diphosphate + 2 H(+). Its pathway is purine metabolism; GMP biosynthesis; GMP from XMP (L-Gln route): step 1/1. Functionally, catalyzes the synthesis of GMP from XMP. In Pseudomonas fluorescens (strain ATCC BAA-477 / NRRL B-23932 / Pf-5), this protein is GMP synthase [glutamine-hydrolyzing].